A 331-amino-acid chain; its full sequence is uncharacterized protein (331 aa).

2 disordered regions span residues 131–163 (ISHA…KKRS) and 190–209 (DEQK…VQSS). A compositionally biased stretch (basic residues) spans 140–162 (RPKPTKPRASRKRAAIAQSKKKR). A compositionally biased stretch (polar residues) spans 195–209 (RQSTSQPDKEIVQSS).

This is an uncharacterized protein from Caenorhabditis elegans.